Reading from the N-terminus, the 578-residue chain is Arginine--tRNA ligase (578 aa).

Positions 127 to 137 (PNLAKEMHVGH) match the 'HIGH' region motif.

This sequence belongs to the class-I aminoacyl-tRNA synthetase family. As to quaternary structure, monomer.

It localises to the cytoplasm. The enzyme catalyses tRNA(Arg) + L-arginine + ATP = L-arginyl-tRNA(Arg) + AMP + diphosphate. The protein is Arginine--tRNA ligase of Pseudomonas syringae pv. tomato (strain ATCC BAA-871 / DC3000).